Here is a 425-residue protein sequence, read N- to C-terminus: Probable G-protein coupled receptor 63 (425 aa).

Over 1 to 87 the chain is Extracellular; it reads MVVSGVLTAP…VFKSLNLAVQ (87 aa). Asn-22, Asn-34, and Asn-68 each carry an N-linked (GlcNAc...) asparagine glycan. The helical transmembrane segment at 88–112 threads the bilayer; it reads IILSAIMIFILFVSFLGNLVVCLMV. Topologically, residues 113 to 123 are cytoplasmic; it reads YQKAAMRSAIN. The chain crosses the membrane as a helical span at residues 124–148; that stretch reads ILLASLAFADMLLAVLNMPFALVTI. The Extracellular portion of the chain corresponds to 149–165; it reads LTTRWIFGKFFCRLSAM. A helical transmembrane segment spans residues 166–190; sequence FFWLFVIEGVAILLIISIDRFLIIV. Over 191 to 202 the chain is Cytoplasmic; the sequence is QRQDKLNPYRAK. A helical transmembrane segment spans residues 203-222; it reads VLIAVSWATAFSVAFPLAVG. Over 223–247 the chain is Extracellular; sequence NPDLQIPSRAPQCVFGYTTNSGYQA. The helical transmembrane segment at 248–272 threads the bilayer; it reads YVILISLISFFIPFLVILYSFMGIL. The Cytoplasmic segment spans residues 273–321; it reads NTLRHNALRIHSYPEGICLSQASKLGLMSLQRPFQMSIDMGFKTRAFTT. Residues 322–345 form a helical membrane-spanning segment; sequence ILILFAVFIVCWAPFTTYSLVATF. Residues 346–357 lie on the Extracellular side of the membrane; the sequence is SKHFYYQHNFFE. Residues 358-379 form a helical membrane-spanning segment; it reads ISTWLLWLCYLKSALNPLIYYW. Residues 380–425 lie on the Cytoplasmic side of the membrane; that stretch reads RIKKFHDACLDMMPKSFKFLPRLPGHTRRRIRPSAVYVCGEHRTVL.

Belongs to the G-protein coupled receptor 1 family. As to expression, brain specific.

It is found in the cell membrane. Its function is as follows. Orphan receptor. May play a role in brain function. The polypeptide is Probable G-protein coupled receptor 63 (Gpr63) (Mus musculus (Mouse)).